The primary structure comprises 235 residues: Ubiquinone/menaquinone biosynthesis C-methyltransferase UbiE (235 aa).

Thr-60, Asp-81, and Ser-126 together coordinate S-adenosyl-L-methionine.

The protein belongs to the class I-like SAM-binding methyltransferase superfamily. MenG/UbiE family.

It catalyses the reaction a 2-demethylmenaquinol + S-adenosyl-L-methionine = a menaquinol + S-adenosyl-L-homocysteine + H(+). The catalysed reaction is a 2-methoxy-6-(all-trans-polyprenyl)benzene-1,4-diol + S-adenosyl-L-methionine = a 5-methoxy-2-methyl-3-(all-trans-polyprenyl)benzene-1,4-diol + S-adenosyl-L-homocysteine + H(+). Its pathway is quinol/quinone metabolism; menaquinone biosynthesis; menaquinol from 1,4-dihydroxy-2-naphthoate: step 2/2. It participates in cofactor biosynthesis; ubiquinone biosynthesis. Functionally, methyltransferase required for the conversion of demethylmenaquinol (DMKH2) to menaquinol (MKH2) and the conversion of 2-polyprenyl-6-methoxy-1,4-benzoquinol (DDMQH2) to 2-polyprenyl-3-methyl-6-methoxy-1,4-benzoquinol (DMQH2). The polypeptide is Ubiquinone/menaquinone biosynthesis C-methyltransferase UbiE (Geobacter sp. (strain M21)).